We begin with the raw amino-acid sequence, 615 residues long: Kelch-like protein 26 (615 aa).

Positions 1–21 (MAESGGSSGGAGGGGAFGAGP) are enriched in gly residues. Residues 1 to 35 (MAESGGSSGGAGGGGAFGAGPGPERPNSTADKNGA) form a disordered region. Ala2 bears the N-acetylalanine mark. The BTB domain maps to 63–130 (LDVVLTINRE…AYSAEVTLDL (68 aa)). Residues 165–266 (CLNIGQMATT…QSSELVDSVQ (102 aa)) enclose the BACK domain. 6 Kelch repeats span residues 310–361 (SLVT…VLDN), 362–413 (FVYV…VLCG), 414–460 (MVYA…ASGG), 461–508 (RLYI…GAGG), 510–559 (IYAL…LLER), and 561–608 (IYIV…PVLL).

Functionally, may play a role in endo(sarco)plasmic reticulum (ER/SR) mitochondrial signaling. May be part of the ubiquitin-proteasome system (UPS) and affect ubiquitination and degradation of target substrates in cardiomyocytes. This chain is Kelch-like protein 26 (KLHL26), found in Homo sapiens (Human).